The following is a 279-amino-acid chain: MVQIGPLAIRWYGVLLTLAIFLGYELARRRLRAWGWDLEPFERVVFWAVVFGVVGARLGYVLTSPGYFLENPLEALYIWHGGLSFHGAILGGGLTFYYFHRRRGYPLWPYLDAATPGVALGIVAGRIGNLMNGSDTAGRLTTLPIGFTWPEWARGFPGVCPGIDDISEVYRCAELLRGPVHLTQVYGAVVGLILLFLSLYWLRKRPFYGYAFWQFVLWYSVLRSVLEEPFRLNPLWLPVYRNDELGIGLFTATQVVSLPLVLLSLYMLRRLGKGEASRR.

The next 4 helical transmembrane spans lie at 4-24 (IGPL…FLGY), 44-64 (VVFW…VLTS), 76-96 (LYIW…GLTF), and 104-124 (GYPL…GIVA). Arg126 serves as a coordination point for a 1,2-diacyl-sn-glycero-3-phospho-(1'-sn-glycerol). 3 helical membrane passes run 182 to 202 (LTQV…LYWL), 206 to 226 (PFYG…RSVL), and 245 to 265 (LGIG…LLSL).

This sequence belongs to the Lgt family.

It is found in the cell inner membrane. It carries out the reaction L-cysteinyl-[prolipoprotein] + a 1,2-diacyl-sn-glycero-3-phospho-(1'-sn-glycerol) = an S-1,2-diacyl-sn-glyceryl-L-cysteinyl-[prolipoprotein] + sn-glycerol 1-phosphate + H(+). Its pathway is protein modification; lipoprotein biosynthesis (diacylglyceryl transfer). In terms of biological role, catalyzes the transfer of the diacylglyceryl group from phosphatidylglycerol to the sulfhydryl group of the N-terminal cysteine of a prolipoprotein, the first step in the formation of mature lipoproteins. The polypeptide is Phosphatidylglycerol--prolipoprotein diacylglyceryl transferase (Thermus thermophilus (strain ATCC 27634 / DSM 579 / HB8)).